Consider the following 622-residue polypeptide: Phosphomethylpyrimidine synthase (622 aa).

Residues 109 to 130 (EPISNNNNDRQSSDKQLSFTTN) are disordered. Residues N234, M263, Y292, H328, 348 to 350 (SRG), 389 to 392 (DGLR), and E428 contribute to the substrate site. Residue H432 coordinates Zn(2+). Y455 contributes to the substrate binding site. Residue H496 coordinates Zn(2+). C576, C579, and C584 together coordinate [4Fe-4S] cluster.

This sequence belongs to the ThiC family. As to quaternary structure, homodimer. [4Fe-4S] cluster serves as cofactor.

The enzyme catalyses 5-amino-1-(5-phospho-beta-D-ribosyl)imidazole + S-adenosyl-L-methionine = 4-amino-2-methyl-5-(phosphooxymethyl)pyrimidine + CO + 5'-deoxyadenosine + formate + L-methionine + 3 H(+). It participates in cofactor biosynthesis; thiamine diphosphate biosynthesis. Catalyzes the synthesis of the hydroxymethylpyrimidine phosphate (HMP-P) moiety of thiamine from aminoimidazole ribotide (AIR) in a radical S-adenosyl-L-methionine (SAM)-dependent reaction. This Baumannia cicadellinicola subsp. Homalodisca coagulata protein is Phosphomethylpyrimidine synthase.